The primary structure comprises 650 residues: DNA gyrase subunit B (650 aa).

A compositionally biased stretch (basic and acidic residues) spans arginine 400–proline 414. The segment at arginine 400–glycine 422 is disordered. One can recognise a Toprim domain in the interval serine 435 to proline 549. Mg(2+) is bound by residues glutamate 441, aspartate 514, and aspartate 516.

This sequence belongs to the type II topoisomerase GyrB family. In terms of assembly, heterotetramer, composed of two GyrA and two GyrB chains. In the heterotetramer, GyrA contains the active site tyrosine that forms a transient covalent intermediate with DNA, while GyrB binds cofactors and catalyzes ATP hydrolysis. It depends on Mg(2+) as a cofactor. Mn(2+) serves as cofactor. Ca(2+) is required as a cofactor.

It is found in the cytoplasm. It carries out the reaction ATP-dependent breakage, passage and rejoining of double-stranded DNA.. Functionally, a type II topoisomerase that negatively supercoils closed circular double-stranded (ds) DNA in an ATP-dependent manner to modulate DNA topology and maintain chromosomes in an underwound state. Negative supercoiling favors strand separation, and DNA replication, transcription, recombination and repair, all of which involve strand separation. Also able to catalyze the interconversion of other topological isomers of dsDNA rings, including catenanes and knotted rings. Type II topoisomerases break and join 2 DNA strands simultaneously in an ATP-dependent manner. This Mycoplasma genitalium (strain ATCC 33530 / DSM 19775 / NCTC 10195 / G37) (Mycoplasmoides genitalium) protein is DNA gyrase subunit B.